The sequence spans 181 residues: Ubiquitin-conjugating enzyme E2 19 (181 aa).

A compositionally biased stretch (polar residues) spans 1–10 (MATVNGYTGN). The segment at 1 to 33 (MATVNGYTGNTPAATTPAATGSKQSAPPTKTVD) is disordered. The segment covering 11-20 (TPAATTPAAT) has biased composition (low complexity). Residues 36 to 181 (SVLKRLQSEL…VEKLYKPLNA (146 aa)) enclose the UBC core domain. The Glycyl thioester intermediate role is filled by C120.

The protein belongs to the ubiquitin-conjugating enzyme family. Interacts with OR. Binds to LOT1. In terms of tissue distribution, expressed in all tissues with cell division activities and in mature leaves.

It is found in the cytoplasm. It localises to the nucleus. The catalysed reaction is S-ubiquitinyl-[E1 ubiquitin-activating enzyme]-L-cysteine + [E2 ubiquitin-conjugating enzyme]-L-cysteine = [E1 ubiquitin-activating enzyme]-L-cysteine + S-ubiquitinyl-[E2 ubiquitin-conjugating enzyme]-L-cysteine.. It participates in protein modification; protein ubiquitination. Its function is as follows. Accepts the ubiquitin from the E1 complex and catalyzes its covalent attachment to other proteins. Part of the anaphase-promoting complex (APC). May have a key function during cell cycle and be involved in cyclin B1 degradation. Triggers OR ubiquitination that mediates its subsequent nuclear localization. Involved in the repression of early light-induced proteins (ELIPs, e.g. ELIP1 and ELIP2) expression, probably via OR nuclear relocalization. This chain is Ubiquitin-conjugating enzyme E2 19, found in Arabidopsis thaliana (Mouse-ear cress).